We begin with the raw amino-acid sequence, 590 residues long: TPR repeat-containing protein PA4667 (590 aa).

TPR repeat units follow at residues 235–268, 269–302, 370–403, 405–438, and 508–541; these read VAPL…HPDD, KRVR…FPDD, LPAQ…QPDY, IQLY…YPED, and PAIL…YPDH.

The protein is TPR repeat-containing protein PA4667 of Pseudomonas aeruginosa (strain ATCC 15692 / DSM 22644 / CIP 104116 / JCM 14847 / LMG 12228 / 1C / PRS 101 / PAO1).